The primary structure comprises 155 residues: Large ribosomal subunit protein uL15 (155 aa).

Residues Met1–Lys63 are disordered. Composition is skewed to gly residues over residues Arg21–Ser31 and Ser42–Gly52.

The protein belongs to the universal ribosomal protein uL15 family. In terms of assembly, part of the 50S ribosomal subunit.

Functionally, binds to the 23S rRNA. In Symbiobacterium thermophilum (strain DSM 24528 / JCM 14929 / IAM 14863 / T), this protein is Large ribosomal subunit protein uL15.